The chain runs to 310 residues: Aspartate carbamoyltransferase catalytic subunit (310 aa).

2 residues coordinate carbamoyl phosphate: arginine 55 and threonine 56. Residue lysine 85 participates in L-aspartate binding. The carbamoyl phosphate site is built by arginine 106, histidine 135, and glutamine 138. L-aspartate-binding residues include arginine 168 and arginine 230. Leucine 268 and proline 269 together coordinate carbamoyl phosphate.

The protein belongs to the aspartate/ornithine carbamoyltransferase superfamily. ATCase family. Heterododecamer (2C3:3R2) of six catalytic PyrB chains organized as two trimers (C3), and six regulatory PyrI chains organized as three dimers (R2).

It catalyses the reaction carbamoyl phosphate + L-aspartate = N-carbamoyl-L-aspartate + phosphate + H(+). It participates in pyrimidine metabolism; UMP biosynthesis via de novo pathway; (S)-dihydroorotate from bicarbonate: step 2/3. Catalyzes the condensation of carbamoyl phosphate and aspartate to form carbamoyl aspartate and inorganic phosphate, the committed step in the de novo pyrimidine nucleotide biosynthesis pathway. This chain is Aspartate carbamoyltransferase catalytic subunit, found in Buchnera aphidicola subsp. Acyrthosiphon pisum (strain 5A).